The primary structure comprises 213 residues: MAKNYYDITLALSGICQSARLVQQLAHQGHCDADALHVSLNSVIDMNPNSTLGVFGGSEANLRLGLETLLGVLNASSRQGLNAELTRYTLSLMVLERKLSSAKGALNTLGDRINGLQRQLDHFDLQSDTLMSAMAGIYVDVISPLGPRIQVTGSPAVLQSPQVQAKVRASLLAGIRAAVLWHQVGGGRLQLMFSRHRLTTQAKQILAHLTPEL.

Residues 79 to 122 are a coiled coil; it reads QGLNAELTRYTLSLMVLERKLSSAKGALNTLGDRINGLQRQLDH.

It belongs to the HflD family.

Its subcellular location is the cytoplasm. The protein localises to the cell inner membrane. The polypeptide is High frequency lysogenization protein HflD homolog (Salmonella dublin (strain CT_02021853)).